We begin with the raw amino-acid sequence, 370 residues long: 4-hydroxy-3-methylbut-2-en-1-yl diphosphate synthase (flavodoxin) (370 aa).

Residues Cys-270, Cys-273, Cys-305, and Glu-312 each coordinate [4Fe-4S] cluster.

This sequence belongs to the IspG family. The cofactor is [4Fe-4S] cluster.

It carries out the reaction (2E)-4-hydroxy-3-methylbut-2-enyl diphosphate + oxidized [flavodoxin] + H2O + 2 H(+) = 2-C-methyl-D-erythritol 2,4-cyclic diphosphate + reduced [flavodoxin]. Its pathway is isoprenoid biosynthesis; isopentenyl diphosphate biosynthesis via DXP pathway; isopentenyl diphosphate from 1-deoxy-D-xylulose 5-phosphate: step 5/6. In terms of biological role, converts 2C-methyl-D-erythritol 2,4-cyclodiphosphate (ME-2,4cPP) into 1-hydroxy-2-methyl-2-(E)-butenyl 4-diphosphate. This is 4-hydroxy-3-methylbut-2-en-1-yl diphosphate synthase (flavodoxin) from Marinomonas sp. (strain MWYL1).